The following is a 290-amino-acid chain: Arylamine N-acetyltransferase 1 (290 aa).

At Met-1 the chain carries N-acetylmethionine. Catalysis depends on Cys-68, which acts as the Acyl-thioester intermediate. Positions 103 and 104 each coordinate CoA. A substrate-binding site is contributed by 106-107; it reads IH. Catalysis depends on residues His-107 and Asp-122. CoA contacts are provided by Tyr-208 and Ser-214.

The protein belongs to the arylamine N-acetyltransferase family.

It is found in the cytoplasm. The catalysed reaction is an arylamine + acetyl-CoA = an N-acetylarylamine + CoA. Functionally, participates in the detoxification of a plethora of hydrazine and arylamine drugs. Catalyzes the N- or O-acetylation of various arylamine and heterocyclic amine substrates and is able to bioactivate several known carcinogens. This Homo sapiens (Human) protein is Arylamine N-acetyltransferase 1 (NAT1).